Consider the following 1359-residue polypeptide: DNA-directed RNA polymerase subunit beta (1359 aa).

Belongs to the RNA polymerase beta chain family. As to quaternary structure, the RNAP catalytic core consists of 2 alpha, 1 beta, 1 beta' and 1 omega subunit. When a sigma factor is associated with the core the holoenzyme is formed, which can initiate transcription.

The catalysed reaction is RNA(n) + a ribonucleoside 5'-triphosphate = RNA(n+1) + diphosphate. Functionally, DNA-dependent RNA polymerase catalyzes the transcription of DNA into RNA using the four ribonucleoside triphosphates as substrates. This Nitrosomonas eutropha (strain DSM 101675 / C91 / Nm57) protein is DNA-directed RNA polymerase subunit beta.